Consider the following 823-residue polypeptide: Protein phosphatase 1 regulatory subunit 29 (823 aa).

The N-terminal stretch at 1-22 (MLRLGLCAAALLCVCQPGAVRA) is a signal peptide. The Extracellular segment spans residues 23 to 397 (DCWLIEGDKG…APSTSTTTHY (375 aa)). N54 is a glycosylation site (N-linked (GlcNAc...) asparagine). 5 LRR repeats span residues 56–77 (TVHD…SLNR), 80–101 (NLTD…AFLG), 104–125 (SLQV…MLRG), 128–149 (RLQF…AFSE), and 152–173 (SLIS…TFAS). Residues N80, N85, and N117 are each glycosylated (N-linked (GlcNAc...) asparagine). In terms of domain architecture, LRRCT spans 185 to 247 (NPFNCECDLF…ITVLQAKCRN (63 aa)). 2 N-linked (GlcNAc...) asparagine glycosylation sites follow: N205 and N247. Positions 249–294 (SMPARPVSHPTPYSTDAQREPDENSGFNPDEILSVEPPASSTTDAS) are disordered. In terms of domain architecture, Fibronectin type-III spans 292-379 (DASAGPAIKL…FNHTCLTFTT (88 aa)). The helical transmembrane segment at 398 to 418 (IMTILGCLFGMVIVLGAVYYC) threads the bilayer. The Cytoplasmic segment spans residues 419 to 823 (LRKRRMQEEK…WKGVSAQQKL (405 aa)). The disordered stretch occupies residues 590-624 (ASSAATPGALERPSFLSPPYKESSHHPLQRQLSAD). S622, S671, and S675 each carry phosphoserine.

Interacts with PPP1CA.

It is found in the membrane. In terms of biological role, inhibits phosphatase activity of protein phosphatase 1 (PP1) complexes. The polypeptide is Protein phosphatase 1 regulatory subunit 29 (Elfn2) (Mus musculus (Mouse)).